Reading from the N-terminus, the 360-residue chain is Heat-inducible transcription repressor HrcA (360 aa).

The protein belongs to the HrcA family.

Negative regulator of class I heat shock genes (grpE-dnaK-dnaJ and groELS operons). Prevents heat-shock induction of these operons. This Gloeobacter violaceus (strain ATCC 29082 / PCC 7421) protein is Heat-inducible transcription repressor HrcA.